Here is a 386-residue protein sequence, read N- to C-terminus: Queuine tRNA-ribosyltransferase (386 aa).

Residue Asp-99 is the Proton acceptor of the active site. Residues 99 to 103, Asp-153, Gln-198, and Gly-225 each bind substrate; that span reads DSGGF. The RNA binding stretch occupies residues 256–262; it reads GVGKPED. Asp-275 (nucleophile) is an active-site residue. Positions 280–284 are RNA binding; important for wobble base 34 recognition; it reads TRNAR. Residues Cys-313, Cys-315, Cys-318, and His-344 each coordinate Zn(2+).

Belongs to the queuine tRNA-ribosyltransferase family. As to quaternary structure, homodimer. Within each dimer, one monomer is responsible for RNA recognition and catalysis, while the other monomer binds to the replacement base PreQ1. It depends on Zn(2+) as a cofactor.

The enzyme catalyses 7-aminomethyl-7-carbaguanine + guanosine(34) in tRNA = 7-aminomethyl-7-carbaguanosine(34) in tRNA + guanine. Its pathway is tRNA modification; tRNA-queuosine biosynthesis. Functionally, catalyzes the base-exchange of a guanine (G) residue with the queuine precursor 7-aminomethyl-7-deazaguanine (PreQ1) at position 34 (anticodon wobble position) in tRNAs with GU(N) anticodons (tRNA-Asp, -Asn, -His and -Tyr). Catalysis occurs through a double-displacement mechanism. The nucleophile active site attacks the C1' of nucleotide 34 to detach the guanine base from the RNA, forming a covalent enzyme-RNA intermediate. The proton acceptor active site deprotonates the incoming PreQ1, allowing a nucleophilic attack on the C1' of the ribose to form the product. After dissociation, two additional enzymatic reactions on the tRNA convert PreQ1 to queuine (Q), resulting in the hypermodified nucleoside queuosine (7-(((4,5-cis-dihydroxy-2-cyclopenten-1-yl)amino)methyl)-7-deazaguanosine). The chain is Queuine tRNA-ribosyltransferase from Acinetobacter baylyi (strain ATCC 33305 / BD413 / ADP1).